A 523-amino-acid chain; its full sequence is GMP synthase [glutamine-hydrolyzing] (523 aa).

The Glutamine amidotransferase type-1 domain maps to 9 to 198; that stretch reads PVLVVDFGAQ…LTEIAGLEQN (190 aa). C86 serves as the catalytic Nucleophile. Residues H172 and E174 contribute to the active site. The 199-residue stretch at 199–397 folds into the GMPS ATP-PPase domain; sequence WTAANIAEEL…LGLPEEIVGR (199 aa). Residue 227 to 233 coordinates ATP; it reads SGGVDSA.

As to quaternary structure, homodimer.

It carries out the reaction XMP + L-glutamine + ATP + H2O = GMP + L-glutamate + AMP + diphosphate + 2 H(+). The protein operates within purine metabolism; GMP biosynthesis; GMP from XMP (L-Gln route): step 1/1. Functionally, catalyzes the synthesis of GMP from XMP. The protein is GMP synthase [glutamine-hydrolyzing] of Corynebacterium glutamicum (strain ATCC 13032 / DSM 20300 / JCM 1318 / BCRC 11384 / CCUG 27702 / LMG 3730 / NBRC 12168 / NCIMB 10025 / NRRL B-2784 / 534).